A 479-amino-acid chain; its full sequence is GMP reductase (479 aa).

CBS domains follow at residues 96–153 and 154–212; these read VLDT…VRDI and AVTD…ATDS. Residues 246-248 and 296-298 contribute to the NADP(+) site; these read DTA and GVG. The active-site Thioimidate intermediate is the Cys303.

This sequence belongs to the IMPDH/GMPR family. GuaB1 subfamily. It depends on a monovalent cation as a cofactor.

The catalysed reaction is IMP + NH4(+) + NADP(+) = GMP + NADPH + 2 H(+). The protein operates within purine metabolism; IMP biosynthesis via salvage pathway. In terms of biological role, involved in the purine-salvage pathway. Catalyzes the NADPH-dependent conversion of GMP to IMP. In Mycobacterium bovis (strain ATCC BAA-935 / AF2122/97), this protein is GMP reductase.